We begin with the raw amino-acid sequence, 153 residues long: 3-hydroxyacyl-[acyl-carrier-protein] dehydratase FabZ (153 aa).

His53 is a catalytic residue.

It belongs to the thioester dehydratase family. FabZ subfamily.

It localises to the cytoplasm. The catalysed reaction is a (3R)-hydroxyacyl-[ACP] = a (2E)-enoyl-[ACP] + H2O. Involved in unsaturated fatty acids biosynthesis. Catalyzes the dehydration of short chain beta-hydroxyacyl-ACPs and long chain saturated and unsaturated beta-hydroxyacyl-ACPs. The polypeptide is 3-hydroxyacyl-[acyl-carrier-protein] dehydratase FabZ (Lawsonia intracellularis (strain PHE/MN1-00)).